A 622-amino-acid polypeptide reads, in one-letter code: MLITRLRVPTIKRPLLPITSHLVRHCIRTYVATNHGNVRPFITPYKSSLPVRCLIAQRHIRTFPSNDKFTTKASNIETILLRKNNEREFKQSLLADAKNFQERFKINLKWILIKNNRPFSLNEISIIASWLILSQILWLILSTTTFISFYLFVINSVFSQEYIHEKKIYERLLKWLLKDHKCSNQDLEITFSPEDKASMLVLSPDWESNSILIKRLNVRDEILDLDLKFHHINLNVSLKNWLLGRGLITNVSIYGIRGCLNLSNFINLVNSFQGDQKTENFLKTLNNVEITDSEILLKQSLSAQETPSLKFSIYNLSLPRLRLNHFISDILSAKTFSGSINNSLFNLFKRQQKLTAVIENNNKNRMASSKFDFTDNNQENYRTVTHQDDPNYVTTLRLNFININDLKFNGDGKFNWLKDGQVEILADIMLTNSTSHLSSESKYAVVDLKVTCRDLKTTFPQEPPVLSTGDSIVSLDELKPIITFINSYEGMANPILKDFSENERLTNSIIWNSPNVSINRQRKSYPLTTKVTSNSTKEIIKFHNQPNTNANEIVLRCKMVKNLSDLQLININQILDQITMELYVDLTKIVEDWEFKNKNDWMKQWGTTFASQLLLFGFGAMV.

Residues 1–70 (MLITRLRVPT…RTFPSNDKFT (70 aa)) constitute a mitochondrion transit peptide. The Mitochondrial matrix segment spans residues 71–123 (TKASNIETILLRKNNEREFKQSLLADAKNFQERFKINLKWILIKNNRPFSLNE). A helical transmembrane segment spans residues 124-144 (ISIIASWLILSQILWLILSTT). The Mitochondrial intermembrane segment spans residues 145-601 (TFISFYLFVI…DWEFKNKNDW (457 aa)). Residues 602–622 (MKQWGTTFASQLLLFGFGAMV) traverse the membrane as a helical segment.

This sequence belongs to the MDM31/MDM32 family. Interacts with MDM31. Participates in a complex of about 175 kDa.

Its subcellular location is the mitochondrion inner membrane. In terms of biological role, involved in the organization of the mitochondrial membranes and the global structure of the mitochondria. Also required for mitochondrial distribution and mobility as well as for the maintenance of mitochondrial DNA nucleoids structures. The polypeptide is Mitochondrial distribution and morphology protein 32 (MDM32) (Saccharomyces cerevisiae (strain ATCC 204508 / S288c) (Baker's yeast)).